The following is a 452-amino-acid chain: Molybdate-anion transporter (452 aa).

The next 12 helical transmembrane spans lie at 1-21 (MLLT…VLEF), 45-65 (YDFY…GPYL), 79-99 (IAII…VSAP), 130-150 (FVLI…FSSF), 180-200 (NGGI…WLGL), 201-221 (GPAS…ALVI), 251-271 (VLLL…FIFL), 281-301 (TPLG…SSLY), 316-336 (VLCL…FSTA), 346-366 (LLAF…MGFL), 377-397 (IGVL…GLLV), and 410-430 (MFSL…SLFT).

This sequence belongs to the major facilitator superfamily.

The protein resides in the cell membrane. Functionally, mediates high-affinity intracellular uptake of the rare oligo-element molybdenum. This Xenopus tropicalis (Western clawed frog) protein is Molybdate-anion transporter (mfsd5).